The sequence spans 314 residues: DegV domain-containing protein XAC3508 (314 aa).

Residues 3–307 enclose the DegV domain; that stretch reads IGIVVDSACD…KGALAVGFAA (305 aa). Hexadecanoate contacts are provided by Thr-63 and Ser-96.

May bind long-chain fatty acids, such as palmitate, and may play a role in lipid transport or fatty acid metabolism. The protein is DegV domain-containing protein XAC3508 of Xanthomonas axonopodis pv. citri (strain 306).